The sequence spans 79 residues: Small ribosomal subunit protein uS17 (79 aa).

It belongs to the universal ribosomal protein uS17 family. As to quaternary structure, part of the 30S ribosomal subunit.

One of the primary rRNA binding proteins, it binds specifically to the 5'-end of 16S ribosomal RNA. The protein is Small ribosomal subunit protein uS17 of Caulobacter vibrioides (strain NA1000 / CB15N) (Caulobacter crescentus).